The sequence spans 893 residues: Eukaryotic translation initiation factor 3 subunit A (893 aa).

Positions 319–502 constitute a PCI domain; that stretch reads LQRMAAHVLL…NSIFFGTDLT (184 aa). Coiled-coil stretches lie at residues 576–707 and 784–881; these read QKII…RAKR and EIAL…REVA. Disordered stretches follow at residues 592 to 634 and 837 to 893; these read AREL…EIQA and AEAR…RRRQ. The span at 837–881 shows a compositional bias: basic and acidic residues; the sequence is AEARRLEREAEDEKRRQQYEKQRAKEEEAERKIQEDRDRLAREVA.

It belongs to the eIF-3 subunit A family. As to quaternary structure, component of the eukaryotic translation initiation factor 3 (eIF-3) complex. The eIF-3 complex interacts with pix.

It is found in the cytoplasm. Its function is as follows. RNA-binding component of the eukaryotic translation initiation factor 3 (eIF-3) complex, which is involved in protein synthesis of a specialized repertoire of mRNAs and, together with other initiation factors, stimulates binding of mRNA and methionyl-tRNAi to the 40S ribosome. The eIF-3 complex specifically targets and initiates translation of a subset of mRNAs involved in cell proliferation. This is Eukaryotic translation initiation factor 3 subunit A from Drosophila grimshawi (Hawaiian fruit fly).